The primary structure comprises 145 residues: Large ribosomal subunit protein uL15 (145 aa).

The disordered stretch occupies residues Met1–Gln54. Gly residues predominate over residues Ser42–Gly52.

Belongs to the universal ribosomal protein uL15 family. As to quaternary structure, part of the 50S ribosomal subunit.

Functionally, binds to the 23S rRNA. The sequence is that of Large ribosomal subunit protein uL15 from Mycoplasma capricolum subsp. capricolum (strain California kid / ATCC 27343 / NCTC 10154).